A 391-amino-acid polypeptide reads, in one-letter code: uncharacterized protein (391 aa).

The first 20 residues, 1 to 20 (MRKLFLLSILMIGVIVAFAG), serve as a signal peptide directing secretion. Cys-21 carries the S-archaeol cysteine lipid modification. The Fe/B12 periplasmic-binding domain maps to 104-377 (RIVTDFYCPI…DFAKMIHPEL (274 aa)).

It is found in the cell membrane. This is an uncharacterized protein from Methanocaldococcus jannaschii (strain ATCC 43067 / DSM 2661 / JAL-1 / JCM 10045 / NBRC 100440) (Methanococcus jannaschii).